We begin with the raw amino-acid sequence, 303 residues long: Ornithine carbamoyltransferase (303 aa).

Carbamoyl phosphate-binding positions include 52-55 (STRT), Q79, R103, and 130-133 (HPCQ). Residues N161, D222, and 226–227 (SM) each bind L-ornithine. Carbamoyl phosphate contacts are provided by residues 262 to 263 (CL) and R290.

Belongs to the aspartate/ornithine carbamoyltransferase superfamily. OTCase family.

It localises to the cytoplasm. It catalyses the reaction carbamoyl phosphate + L-ornithine = L-citrulline + phosphate + H(+). It functions in the pathway amino-acid biosynthesis; L-arginine biosynthesis; L-arginine from L-ornithine and carbamoyl phosphate: step 1/3. Reversibly catalyzes the transfer of the carbamoyl group from carbamoyl phosphate (CP) to the N(epsilon) atom of ornithine (ORN) to produce L-citrulline. This Geobacter metallireducens (strain ATCC 53774 / DSM 7210 / GS-15) protein is Ornithine carbamoyltransferase.